Reading from the N-terminus, the 348-residue chain is Dual-specificity RNA methyltransferase RlmN (348 aa).

The Proton acceptor role is filled by Glu94. The region spanning 100-330 is the Radical SAM core domain; sequence GKHNWTACIS…TAIIRASRGR (231 aa). Cys107 and Cys336 form a disulfide bridge. Residues Cys114, Cys118, and Cys121 each coordinate [4Fe-4S] cluster. S-adenosyl-L-methionine is bound by residues 163 to 164, Ser195, 217 to 219, and Asn293; these read GE and SLN. Cys336 functions as the S-methylcysteine intermediate in the catalytic mechanism.

Belongs to the radical SAM superfamily. RlmN family. The cofactor is [4Fe-4S] cluster.

The protein localises to the cytoplasm. It catalyses the reaction adenosine(2503) in 23S rRNA + 2 reduced [2Fe-2S]-[ferredoxin] + 2 S-adenosyl-L-methionine = 2-methyladenosine(2503) in 23S rRNA + 5'-deoxyadenosine + L-methionine + 2 oxidized [2Fe-2S]-[ferredoxin] + S-adenosyl-L-homocysteine. The enzyme catalyses adenosine(37) in tRNA + 2 reduced [2Fe-2S]-[ferredoxin] + 2 S-adenosyl-L-methionine = 2-methyladenosine(37) in tRNA + 5'-deoxyadenosine + L-methionine + 2 oxidized [2Fe-2S]-[ferredoxin] + S-adenosyl-L-homocysteine. In terms of biological role, specifically methylates position 2 of adenine 2503 in 23S rRNA and position 2 of adenine 37 in tRNAs. m2A2503 modification seems to play a crucial role in the proofreading step occurring at the peptidyl transferase center and thus would serve to optimize ribosomal fidelity. The polypeptide is Dual-specificity RNA methyltransferase RlmN (Syntrophus aciditrophicus (strain SB)).